Reading from the N-terminus, the 319-residue chain is RWD domain-containing protein 2B (319 aa).

In terms of domain architecture, RWD spans 41–165 (AELDLLASMF…EWVREHASGY (125 aa)). The residue at position 275 (Ser275) is a Phosphoserine.

In terms of tissue distribution, ubiquitous.

This Homo sapiens (Human) protein is RWD domain-containing protein 2B (RWDD2B).